The chain runs to 391 residues: L-tryptophan--pyruvate aminotransferase 1 (391 aa).

Residues Y58, 100–101 (ST), N168, 191–194 (DFAY), 214–217 (TFSK), and R225 each bind pyridoxal 5'-phosphate. The residue at position 217 (K217) is an N6-(pyridoxal phosphate)lysine.

The protein belongs to the alliinase family. The cofactor is pyridoxal 5'-phosphate. As to expression, expressed at the leaf margin and in the vasculature of emerging young leaves. Expressed in the quiescent center and in the vasculature of root tips. Detected in the shoot apical meristem, stems, sepals, stamen filaments, the shoot and root junction, the stigma and the base of the silique.

Its subcellular location is the cytoplasm. It catalyses the reaction L-tryptophan + 2-oxoglutarate = indole-3-pyruvate + L-glutamate. The enzyme catalyses L-tryptophan + pyruvate = indole-3-pyruvate + L-alanine. It participates in plant hormone metabolism; auxin biosynthesis. With respect to regulation, inhibited by L-kynurenine. Functionally, L-tryptophan aminotransferase involved in auxin (IAA) biosynthesis. Can convert L-tryptophan and pyruvate to indole-3-pyruvic acid (IPA) and alanine. Catalyzes the first step in IPA branch of the auxin biosynthetic pathway. Required for auxin production to initiate multiple change in growth in response to environmental and developmental cues. It is also active with phenylalanine, tyrosine, leucine, alanine, methionine and glutamine. Both TAA1 and TAR2 are required for maintaining proper auxin levels in roots, while TAA1, TAR1 and TAR2 are required for proper embryo patterning. Involved in the maintenance of the root stem cell niches and required for shade avoidance. In Arabidopsis thaliana (Mouse-ear cress), this protein is L-tryptophan--pyruvate aminotransferase 1 (TAA1).